A 151-amino-acid chain; its full sequence is Small ribosomal subunit protein uS9 (151 aa).

Low complexity predominate over residues Met1–Gln19. Disordered regions lie at residues Met1 to Ser20 and Lys121 to Arg151. Over residues Arg127 to Lys136 the composition is skewed to basic and acidic residues. The segment covering Tyr137–Arg151 has biased composition (basic residues).

Belongs to the universal ribosomal protein uS9 family.

The protein is Small ribosomal subunit protein uS9 (rpsI) of Mycobacterium bovis (strain ATCC BAA-935 / AF2122/97).